We begin with the raw amino-acid sequence, 159 residues long: Phosphopantetheine adenylyltransferase (159 aa).

Serine 8 serves as a coordination point for substrate. ATP contacts are provided by residues 8–9 and histidine 16; that span reads SF. 3 residues coordinate substrate: lysine 40, valine 72, and arginine 86. ATP contacts are provided by residues 87-89, glutamate 97, and 122-128; these read GVR and YAALRSS.

Belongs to the bacterial CoaD family. In terms of assembly, homohexamer. Mg(2+) is required as a cofactor.

It localises to the cytoplasm. The catalysed reaction is (R)-4'-phosphopantetheine + ATP + H(+) = 3'-dephospho-CoA + diphosphate. It functions in the pathway cofactor biosynthesis; coenzyme A biosynthesis; CoA from (R)-pantothenate: step 4/5. Functionally, reversibly transfers an adenylyl group from ATP to 4'-phosphopantetheine, yielding dephospho-CoA (dPCoA) and pyrophosphate. The protein is Phosphopantetheine adenylyltransferase of Treponema pallidum (strain Nichols).